Reading from the N-terminus, the 1291-residue chain is DNA-directed RNA polymerase subunit beta (1291 aa).

The protein belongs to the RNA polymerase beta chain family. As to quaternary structure, the RNAP catalytic core consists of 2 alpha, 1 beta, 1 beta' and 1 omega subunit. When a sigma factor is associated with the core the holoenzyme is formed, which can initiate transcription.

It catalyses the reaction RNA(n) + a ribonucleoside 5'-triphosphate = RNA(n+1) + diphosphate. Its function is as follows. DNA-dependent RNA polymerase catalyzes the transcription of DNA into RNA using the four ribonucleoside triphosphates as substrates. The sequence is that of DNA-directed RNA polymerase subunit beta from Mycoplasma mycoides subsp. mycoides SC (strain CCUG 32753 / NCTC 10114 / PG1).